We begin with the raw amino-acid sequence, 160 residues long: MNIIQSGITAENSSIAIIIARFNEFINKNLLLGALDTLKRIGQVHEENILKIYVPGTYEIPTIASYIAKSGKYDAIIAIGTIIKGQTDHFKYIANDTSSSLSRISAQYFLPITLGILTTKNIEQSIERSGTKMGNKGSDAALAALEMINVMKKLKKVIYY.

5-amino-6-(D-ribitylamino)uracil-binding positions include phenylalanine 22, 57-59 (TYE), and 81-83 (TII). 86–87 (QT) is a binding site for (2S)-2-hydroxy-3-oxobutyl phosphate. Histidine 89 functions as the Proton donor in the catalytic mechanism. Residue leucine 114 participates in 5-amino-6-(D-ribitylamino)uracil binding. Arginine 128 is a (2S)-2-hydroxy-3-oxobutyl phosphate binding site.

Belongs to the DMRL synthase family. Forms an icosahedral capsid composed of 60 subunits, arranged as a dodecamer of pentamers.

It catalyses the reaction (2S)-2-hydroxy-3-oxobutyl phosphate + 5-amino-6-(D-ribitylamino)uracil = 6,7-dimethyl-8-(1-D-ribityl)lumazine + phosphate + 2 H2O + H(+). Its pathway is cofactor biosynthesis; riboflavin biosynthesis; riboflavin from 2-hydroxy-3-oxobutyl phosphate and 5-amino-6-(D-ribitylamino)uracil: step 1/2. Catalyzes the formation of 6,7-dimethyl-8-ribityllumazine by condensation of 5-amino-6-(D-ribitylamino)uracil with 3,4-dihydroxy-2-butanone 4-phosphate. This is the penultimate step in the biosynthesis of riboflavin. The chain is 6,7-dimethyl-8-ribityllumazine synthase from Buchnera aphidicola subsp. Acyrthosiphon pisum (strain APS) (Acyrthosiphon pisum symbiotic bacterium).